Consider the following 208-residue polypeptide: Protein IncB (208 aa).

Functionally, this protein is thought to be cis acting and to contain the putative attachment site on the DNA for the cellular partition apparatus. This is Protein IncB (incB) from Escherichia coli.